A 1844-amino-acid polypeptide reads, in one-letter code: ATPase family AAA domain-containing protein 5 (1844 aa).

Ser44 carries the phosphoserine modification. A Glycyl lysine isopeptide (Lys-Gly) (interchain with G-Cter in SUMO2) cross-link involves residue Lys127. A compositionally biased stretch (polar residues) spans 178-199; sequence QPNTMTSLQNSKKVNPKQGTTK. A disordered region spans residues 178-204; that stretch reads QPNTMTSLQNSKKVNPKQGTTKNDFKK. Phosphoserine is present on residues Ser219, Ser306, Ser311, Ser354, and Ser369. The tract at residues 368 to 384 is interaction with WDR48; that stretch reads KSNVVIQEEELELAVLE. Disordered stretches follow at residues 477–499, 580–623, and 658–700; these read KLKK…REGN, ESEA…NSQL, and KFTR…SKNI. Polar residues-rich tracts occupy residues 580–592 and 599–608; these read ESEA…STPK and RISSTPTTET. Ser602, Ser614, and Ser621 each carry phosphoserine. A compositionally biased stretch (basic residues) spans 664–673; that stretch reads TPKKSKKKSN. Residues 685–700 are compositionally biased toward polar residues; sequence GFTSQIRKASNTSKNI. Ser817 is modified (phosphoserine). Composition is skewed to basic and acidic residues over residues 987-1032 and 1092-1106; these read LEAD…ELSK and RQNL…HEDF. 2 disordered regions span residues 987–1047 and 1092–1118; these read LEAD…SKDS and RQNL…SSDD. Ser1116 carries the post-translational modification Phosphoserine. 1132–1139 contacts ATP; sequence GPTGVGKT. 2 disordered regions span residues 1203-1235 and 1272-1292; these read KKIS…LPPK and ITQT…GAEE. The span at 1272 to 1285 shows a compositional bias: polar residues; sequence ITQTKSTNATNSNV. An LXCXE motif motif is present at residues 1428 to 1432; the sequence is LVCSE. The interval 1591–1635 is disordered; that stretch reads SLSSVSSSSNAEESKTGDEESKARDKGNNPETKKSIPCPPKTTAG. Residues 1602 to 1624 show a composition bias toward basic and acidic residues; sequence EESKTGDEESKARDKGNNPETKK. Positions 1630–1719 are interaction with RAD51 and RFC5; it reads PKTTAGKKCS…AAAEALSFTK (90 aa).

It belongs to the AAA ATPase family. In terms of assembly, component of a heteropentameric replication factor ATAD5 RFC-like complex composed of one large subunit (ATAD5) and four small subunits (RFC2, RFC3, RFC4 and RFC5). Within the ATAD5 RFC-like complex, interacts with RFC2, RFC4 and RFC5. Within the ATAD5 RFC-like complex, interacts directly via-N terminal with RAD51; the interactions is enhanced under replication stress. Interacts with RB1 predominantly in G1 phase via its LXCXE motif. Interacts with RAD9A in growing cells. The interaction with RAD9A is reduced after exposure to DNA replication-inhibiting agents. Interacts with BRD4. Interacts with PCNA. Interacts with deubiquitinating enzyme USP1, and its associated factor, WDR48. Post-translationally, ATR may stimulate the RAD9A dissociation.

The protein resides in the nucleus. Functionally, has an important role in DNA replication and in maintaining genome integrity during replication stress. Involved in a RAD9A-related damage checkpoint, a pathway that is important in determining whether DNA damage is compatible with cell survival or whether it requires cell elimination by apoptosis. Modulates the RAD9A interaction with BCL2 and thereby induces DNA damage-induced apoptosis. Promotes PCNA deubiquitination by recruiting the ubiquitin-specific protease 1 (USP1) and WDR48 thereby down-regulating the error-prone damage bypass pathway. As component of the ATAD5 RFC-like complex, regulates the function of the DNA polymerase processivity factor PCNA by unloading the ring-shaped PCNA homotrimer from DNA after replication during the S phase of the cell cycle. This seems to be dependent on its ATPase activity. Plays important roles in restarting stalled replication forks under replication stress, by unloading the PCNA homotrimer from DNA and recruiting RAD51 possibly through an ATR-dependent manner. Ultimately this enables replication fork regression, breakage, and eventual fork restart. Both the PCNA unloading activity and the interaction with WDR48 are required to efficiently recruit RAD51 to stalled replication forks. Promotes the generation of MUS81-mediated single-stranded DNA-associated breaks in response to replication stress, which is an alternative pathway to restart stalled/regressed replication forks. The chain is ATPase family AAA domain-containing protein 5 from Homo sapiens (Human).